A 650-amino-acid chain; its full sequence is Phosphomethylpyrimidine synthase (650 aa).

Residues asparagine 241, methionine 270, tyrosine 299, histidine 335, 355 to 357 (SRG), 396 to 399 (DGLR), and glutamate 435 each bind substrate. A Zn(2+)-binding site is contributed by histidine 439. Tyrosine 462 contributes to the substrate binding site. Histidine 503 contributes to the Zn(2+) binding site. Cysteine 583, cysteine 586, and cysteine 591 together coordinate [4Fe-4S] cluster.

It belongs to the ThiC family. In terms of assembly, homodimer. It depends on [4Fe-4S] cluster as a cofactor.

It carries out the reaction 5-amino-1-(5-phospho-beta-D-ribosyl)imidazole + S-adenosyl-L-methionine = 4-amino-2-methyl-5-(phosphooxymethyl)pyrimidine + CO + 5'-deoxyadenosine + formate + L-methionine + 3 H(+). Its pathway is cofactor biosynthesis; thiamine diphosphate biosynthesis. Catalyzes the synthesis of the hydroxymethylpyrimidine phosphate (HMP-P) moiety of thiamine from aminoimidazole ribotide (AIR) in a radical S-adenosyl-L-methionine (SAM)-dependent reaction. The polypeptide is Phosphomethylpyrimidine synthase (Pseudoalteromonas translucida (strain TAC 125)).